Here is a 773-residue protein sequence, read N- to C-terminus: Membrane-bound aldehyde dehydrogenase [pyrroloquinoline-quinone] (773 aa).

Residues 1–44 (MGRLNRFRLGKDGRREQASLSRRGFLVTSLGAGVMFGFARPSSA) constitute a signal peptide (tat-type signal).

The cofactor is pyrroloquinoline quinone. Post-translationally, predicted to be exported by the Tat system. The position of the signal peptide cleavage has been experimentally proven.

It localises to the cell inner membrane. The catalysed reaction is an aldehyde + a quinone + H2O = a quinol + a carboxylate + H(+). This is Membrane-bound aldehyde dehydrogenase [pyrroloquinoline-quinone] from Gluconacetobacter polyoxogenes (Acetobacter polyoxogenes).